A 369-amino-acid polypeptide reads, in one-letter code: Histidinol-phosphate aminotransferase 2 (369 aa).

Position 229 is an N6-(pyridoxal phosphate)lysine (lysine 229).

It belongs to the class-II pyridoxal-phosphate-dependent aminotransferase family. Histidinol-phosphate aminotransferase subfamily. As to quaternary structure, homodimer. Requires pyridoxal 5'-phosphate as cofactor.

It catalyses the reaction L-histidinol phosphate + 2-oxoglutarate = 3-(imidazol-4-yl)-2-oxopropyl phosphate + L-glutamate. It functions in the pathway amino-acid biosynthesis; L-histidine biosynthesis; L-histidine from 5-phospho-alpha-D-ribose 1-diphosphate: step 7/9. This is Histidinol-phosphate aminotransferase 2 (hisC2) from Pseudomonas aeruginosa (strain ATCC 15692 / DSM 22644 / CIP 104116 / JCM 14847 / LMG 12228 / 1C / PRS 101 / PAO1).